The sequence spans 201 residues: MSKVLVLYYSSYGHVETLANAVAEGVRGVAGTQVDLYRVAELVPDEVAAKSGYKEDTTAAVLDDPSVLAEYDAIVVGTPTRFGNMASQMRNFWDKTGGLWAQGKLIGKLGGAFTSTASQHGGQETTLTSIHTTLLHHGMAVVGVPYSCPALTELDEVSGGTPYGATTIAGGDGSRQPSENELTIARFQGQHIAEMAAKLAG.

The region spanning 4–192 (VLVLYYSSYG…TIARFQGQHI (189 aa)) is the Flavodoxin-like domain. Residues 10 to 15 (SSYGHV) and 80 to 82 (TRF) each bind FMN. Tyrosine 12 lines the NAD(+) pocket. Tryptophan 100 lines the substrate pocket. Residues 115-121 (STASQHG) and histidine 136 contribute to the FMN site.

Belongs to the WrbA family. It depends on FMN as a cofactor.

The enzyme catalyses a quinone + NADH + H(+) = a quinol + NAD(+). The catalysed reaction is a quinone + NADPH + H(+) = a quinol + NADP(+). In Chromohalobacter salexigens (strain ATCC BAA-138 / DSM 3043 / CIP 106854 / NCIMB 13768 / 1H11), this protein is NAD(P)H dehydrogenase (quinone).